Here is a 331-residue protein sequence, read N- to C-terminus: MALDETLFGYPIYPKFKLGEPRFPQDTFLGRYLHCLDVIDPRTLFASNKKLEESLELLNSFKAGTATNVPDKSLWEAQKLKSAILHPDTGEKVLPPFRMSGFVPFGWITVTGMLLPNPSWPTLLFWQWMNQSHNACVNYANRNATQPQPLSKYIGAYGAAVTAACSISGGLTYFIKKASSLPPTTRIIIQRFVPLPATSLASSLNVICMRWNELETGIQVYEKDTGKVVGVSKVAAKQAVTDTTMVRAFLPVPLLLMPPCIMPYLERFKWVTKTQVRHIFVNAIVCTLSFAVSLPVALALFPQESAISREQLEPELQQKTKNSLLYYNKGL.

The next 4 helical transmembrane spans lie at 104–126 (PFGWITVTGMLLPNPSWPTLLFW), 153–175 (YIGAYGAAVTAACSISGGLTYFI), 243–265 (TTMVRAFLPVPLLLMPPCIMPYL), and 278–300 (HIFVNAIVCTLSFAVSLPVALAL).

The protein belongs to the sideroflexin family.

The protein resides in the mitochondrion inner membrane. The enzyme catalyses citrate(in) = citrate(out). Mitochondrial amino-acid transporter. The chain is Sideroflexin-5 from Caenorhabditis elegans.